Reading from the N-terminus, the 692-residue chain is Epithelial sodium channel subunit alpha (692 aa).

The tract at residues 1–67 (MSSIKGNKLE…PAAPQQPTAE (67 aa)) is disordered. Residues 1-108 (MSSIKGNKLE…CSQHNRMKTA (108 aa)) lie on the Cytoplasmic side of the membrane. Residues 56-65 (PEPAAPQQPT) show a composition bias toward low complexity. The chain crosses the membrane as a helical span at residues 109–129 (FWAVLWLCTFGMMYWQFGLLF). Topologically, residues 130-585 (GEYFSYPVSL…SQWSLWFGSS (456 aa)) are extracellular. 10 disulfide bridges follow: Cys-156–Cys-328, Cys-252–Cys-259, Cys-305–Cys-312, Cys-417–Cys-502, Cys-439–Cys-479, Cys-439–Cys-498, Cys-443–Cys-494, Cys-452–Cys-479, Cys-452–Cys-502, and Cys-454–Cys-468. Positions 198–266 (RSRRDLRGTL…SDCFYQTYSS (69 aa)) are gating release of inhibition by proteolysis (GRIP); protease-sensitive region that is responsible for the proteolytic activation of the channel. A helical transmembrane segment spans residues 586 to 606 (VLSVVEMAELIFDLLVITFLM). Topologically, residues 607-692 (LLRRFRSRYW…GSSACPLGGP (86 aa)) are cytoplasmic. The disordered stretch occupies residues 627-692 (EVASTLASSP…GSSACPLGGP (66 aa)). Residues 628 to 637 (VASTLASSPP) are compositionally biased toward polar residues. Positions 653–666 (GPAPSPALTAPPPA) are enriched in pro residues. The PY motif; recruits WW domain-containing proteins and is thereby required for ubiquitination and inhibition of the channel by NEDD4 and NEDD4L motif lies at 663–667 (PPPAY). The span at 682-692 (AGSSACPLGGP) shows a compositional bias: low complexity.

This sequence belongs to the amiloride-sensitive sodium channel (TC 1.A.6) family. SCNN1A subfamily. As to quaternary structure, heterotrimer; containing an alpha/SCNN1A, a beta/SCNN1B and a gamma/SCNN1G subunit. Interacts with WWP1 (via WW domains). Interacts with WWP2 (via WW domains); inhibits the channel. Interacts with BPIFA1; the interaction is indirect via SCNN1B and inhibits the proteolytic processing of SCNN1A and SCNN1G and the activation of ENaC. Interacts with the full-length immature form of PCSK9 (pro-PCSK9). Ubiquitinated. Can be ubiquitinated at multiple sites and undergo monoubiquitination and polyubiquitination. Ubiquitination by NEDD4 or NEDD4L inhibits the ENaC channel through endocytosis, intracellular retention and degradation of its individual subunits. Post-translationally, N-glycosylated. In terms of processing, ENaC is activated through the proteolytic maturation of its subunits. Furin cleaves the SCNN1A subunit, which results in a stepwise increase in the open probability of the channel due to the release of an inhibitory tract. BPIFA1, which is recruited by the SCNN1B subunit, prevents the proteolytic activation of ENaC.

Its subcellular location is the apical cell membrane. It localises to the cell projection. It is found in the cilium. The protein resides in the cytoplasmic granule. The protein localises to the cytoplasm. Its subcellular location is the cytoplasmic vesicle. It localises to the secretory vesicle. It is found in the acrosome. The protein resides in the flagellum. The enzyme catalyses Na(+)(in) = Na(+)(out). Its activity is regulated as follows. Originally identified and characterized by its inhibition by the diuretic drug amiloride. Functionally, this is one of the three pore-forming subunits of the heterotrimeric epithelial sodium channel (ENaC), a critical regulator of sodium balance and fluid homeostasis. ENaC operates in epithelial tissues, where it mediates the electrodiffusion of sodium ions from extracellular fluid through the apical membrane of cells, with water following osmotically. It plays a key role in maintaining sodium homeostasis through electrogenic sodium reabsorption in the kidneys. Additionally, ENaC is essential for airway surface liquid homeostasis, which is crucial for proper mucus clearance. The chain is Epithelial sodium channel subunit alpha from Pan troglodytes (Chimpanzee).